A 205-amino-acid polypeptide reads, in one-letter code: Potassium-transporting ATPase KdpC subunit (205 aa).

Residues 9 to 29 (VFAVLFLFILGFVYPTVTSLI) form a helical membrane-spanning segment.

This sequence belongs to the KdpC family. As to quaternary structure, the system is composed of three essential subunits: KdpA, KdpB and KdpC.

It is found in the cell membrane. In terms of biological role, part of the high-affinity ATP-driven potassium transport (or Kdp) system, which catalyzes the hydrolysis of ATP coupled with the electrogenic transport of potassium into the cytoplasm. This subunit acts as a catalytic chaperone that increases the ATP-binding affinity of the ATP-hydrolyzing subunit KdpB by the formation of a transient KdpB/KdpC/ATP ternary complex. This chain is Potassium-transporting ATPase KdpC subunit, found in Thermoplasma acidophilum (strain ATCC 25905 / DSM 1728 / JCM 9062 / NBRC 15155 / AMRC-C165).